The sequence spans 67 residues: DNA-directed RNA polymerase subunit omega (67 aa).

Belongs to the RNA polymerase subunit omega family. As to quaternary structure, the RNAP catalytic core consists of 2 alpha, 1 beta, 1 beta' and 1 omega subunit. When a sigma factor is associated with the core the holoenzyme is formed, which can initiate transcription.

It catalyses the reaction RNA(n) + a ribonucleoside 5'-triphosphate = RNA(n+1) + diphosphate. Functionally, promotes RNA polymerase assembly. Latches the N- and C-terminal regions of the beta' subunit thereby facilitating its interaction with the beta and alpha subunits. The polypeptide is DNA-directed RNA polymerase subunit omega (Listeria monocytogenes serotype 4a (strain HCC23)).